The sequence spans 1327 residues: P-glycoprotein 14 (1327 aa).

The span at 1 to 17 (MAPKDDPDNRGFDDQRR) shows a compositional bias: basic and acidic residues. The segment at 1–23 (MAPKDDPDNRGFDDQRRPSQRST) is disordered. At 1 to 104 (MAPKDDPDNR…RYGKKFDYLL (104 aa)) the chain is on the cytoplasmic side. The helical transmembrane segment at 105-125 (LFIGTICAIISGVSQPILALV) threads the bilayer. An ABC transmembrane type-1 1 domain is found at 106-394 (FIGTICAIIS…ISPHMMVLLN (289 aa)). At 126–151 (SGRVTNALLVYPPTSKQFRNKANENV) the chain is on the extracellular side. The chain crosses the membrane as a helical span at residues 152 to 172 (YIFLGIGIFISITNFIQYMCF). Residues 173–225 (QHCCTRVMAQMRHRFVYSVLRQNAGWFDKNHSGTITTKLNDSMERIREGIGDK) lie on the Cytoplasmic side of the membrane. A helical transmembrane segment spans residues 226 to 246 (LGVLLRGFAMLIAAIVVAYIY). Glu247 is a topological domain (extracellular). A helical transmembrane segment spans residues 248 to 268 (WRLASMMLGVAPTCCICMSLL). The Cytoplasmic segment spans residues 269-331 (ARQMTSTTIK…KFAVWKGFWS (63 aa)). A helical membrane pass occupies residues 332–352 (GFFGGLFFFWLFSFLGCGMLY). The Extracellular segment spans residues 353-364 (GAYLLKVGIITT). Residues 365 to 385 (PGDVFIVVMSMLLGAYFLGLI) form a helical membrane-spanning segment. The Cytoplasmic segment spans residues 386-766 (SPHMMVLLNA…NAKGNYLYMF (381 aa)). In terms of domain architecture, ABC transporter 1 spans 429–665 (VKFENVHFRY…GGRYFDLVKA (237 aa)). Residue 464–471 (GHSGCGKS) participates in ATP binding. A disordered region spans residues 671–721 (DPEATEEFEEEEIDLDDTSRSSRRSSMTSARSGSEAFRRGNSLNDSFSGSK). Positions 673-686 (EATEEFEEEEIDLD) are enriched in acidic residues. Residues 694 to 704 (RSSMTSARSGS) show a composition bias toward low complexity. Positions 711–721 (NSLNDSFSGSK) are enriched in polar residues. The region spanning 766 to 1053 (FLGTVFALIR…SAQYFPEFVK (288 aa)) is the ABC transmembrane type-1 2 domain. Residues 767–789 (LGTVFALIRGLELPALALIFGWV) form a helical membrane-spanning segment. Over 790-805 (FEGFTFVPYGGRMMHR) the chain is Extracellular. The chain crosses the membrane as a helical span at residues 806–826 (MAMAVIAFASVGVGVWFSQLA). Residues 827–886 (SSVLFAVVSENLSMRFRVQSFRNLLYQDASYFDNPAHAPGKLITRLASDAPNIKAVVDAR) lie on the Cytoplasmic side of the membrane. The chain crosses the membrane as a helical span at residues 887 to 907 (MLQVIYALAAIIANIAIAFIY). Residues 908–910 (CWQ) are Extracellular-facing. A helical membrane pass occupies residues 911–931 (IGILGTSLILLLAFVMIGLAY). The Cytoplasmic portion of the chain corresponds to 932 to 996 (KISLMNVEQI…KGMIEAINYS (65 aa)). A helical transmembrane segment spans residues 997-1017 (LTQSFMYFMMCFTYAVGIRII). Topologically, residues 1018 to 1030 (YQGDKSSDDTFKG) are extracellular. A helical membrane pass occupies residues 1031–1051 (IIAMMLGAVAVMNSAQYFPEF). At 1052 to 1327 (VKAKTAAGML…KLIKKQDLAV (276 aa)) the chain is on the cytoplasmic side. The region spanning 1086 to 1322 (ILFENVKFSY…KGRYYKLIKK (237 aa)) is the ABC transporter 2 domain. ATP is bound at residue 1121 to 1128 (GPSGSGKS).

It belongs to the ABC transporter superfamily. ABCB family. Multidrug resistance exporter (TC 3.A.1.201) subfamily. As to expression, expressed in pharyngeal epithelial cells that surround the anterior pharyngeal cuticle. Shares same expression pattern as sms-5.

It is found in the apical cell membrane. Contributes to the establishment of a polar lipid barrier to block small molecule passage into the pharyngeal cuticle. Probably exports polar lipids into the developing pharyngeal cuticle to protect against xenobiotic insult. Likely functions in the same pathway as sphingomyelin synthase sms-5. This chain is P-glycoprotein 14, found in Caenorhabditis elegans.